Reading from the N-terminus, the 168-residue chain is Venom nerve growth factor (168 aa).

A signal peptide spans 1-18 (MSMLCYTLIIAFLIGIWA). Positions 19–123 (APKSEDNVSL…ADSLNRNIRA (105 aa)) are excised as a propeptide. The N-linked (GlcNAc...) asparagine glycan is linked to Asn-25. The interval 48–70 (LKTSQNTDQHSPAPKKAEDQEFG) is disordered. N-linked (GlcNAc...) asparagine glycosylation occurs at Asn-148.

It belongs to the NGF-beta family. Homodimer; non-covalently linked. In terms of tissue distribution, expressed by the venom gland.

Its subcellular location is the secreted. Functionally, nerve growth factor is important for the development and maintenance of the sympathetic and sensory nervous systems. It stimulates division and differentiation of sympathetic and embryonic sensory neurons as well as basal forebrain cholinergic neurons in the brain. Its relevance in the snake venom is not clear. However, it has been shown to inhibit metalloproteinase-dependent proteolysis of platelet glycoprotein Ib alpha, suggesting a metalloproteinase inhibition to prevent metalloprotease autodigestion and/or protection against prey proteases. This chain is Venom nerve growth factor, found in Echis ocellatus (Ocellated saw-scaled viper).